The sequence spans 62 residues: Teretoxin Tan1.1 (62 aa).

Positions 1 to 21 are cleaved as a signal peptide; that stretch reads MSCFPVLFVMMLLVSQSVWAF. Positions 22–38 are excised as a propeptide; it reads PGPETRDGSVQDAESRR.

It belongs to the teretoxin A (TA) superfamily. Post-translationally, contains 2 disulfide bonds. In terms of tissue distribution, expressed by the venom duct.

It is found in the secreted. In Terebra anilis (Auger snail), this protein is Teretoxin Tan1.1.